The sequence spans 217 residues: MADKTGTPHPLTEPGVWIERIGGRVFPPHLPALFLDRDGTINVDTDYPSDPAEIVLRPQMLPAIATANRAGIPVVVVTNQSGIARGYFGWSAFAAVNGRVLELLREEGVFVDMVLACAYHEAGVGPLAIPDHPMRKPNPGMLVEAGKRLALDLQRSLIVGDKLADMQAGKRAGLAQGWLVDGEAAVQPGFAIRPLRDSSELGDLLAAIETLGRDNRS.

Aspartate 36 serves as the catalytic Nucleophile. Mg(2+) contacts are provided by aspartate 36 and aspartate 38. Substrate contacts are provided by residues aspartate 36 to aspartate 38, aspartate 44 to tyrosine 47, threonine 78 to serine 81, and arginine 135 to lysine 136. Aspartate 38 serves as the catalytic Proton donor. The Mg(2+) site is built by aspartate 161 and lysine 162. Lysine 162 is a binding site for substrate.

It belongs to the gmhB family. Monomer. Mg(2+) is required as a cofactor.

It is found in the cytoplasm. The catalysed reaction is D-glycero-beta-D-manno-heptose 1,7-bisphosphate + H2O = D-glycero-beta-D-manno-heptose 1-phosphate + phosphate. It participates in nucleotide-sugar biosynthesis; ADP-L-glycero-beta-D-manno-heptose biosynthesis; ADP-L-glycero-beta-D-manno-heptose from D-glycero-beta-D-manno-heptose 7-phosphate: step 2/4. In terms of biological role, converts the D-glycero-beta-D-manno-heptose 1,7-bisphosphate (beta-HBP) intermediate into D-glycero-beta-D-manno-heptose 1-phosphate by removing the phosphate group at the C-7 position. In Mesorhizobium japonicum (strain LMG 29417 / CECT 9101 / MAFF 303099) (Mesorhizobium loti (strain MAFF 303099)), this protein is D-glycero-beta-D-manno-heptose-1,7-bisphosphate 7-phosphatase (gmhB).